The sequence spans 83 residues: MVVIRLSRGGSKGRPFFNIVVADKRVRRDGRFIERLGFYNPSAKEGEEGLRIAQDRLTYWKGVGAQPSPTVDRLIKQAAQKAA.

The protein belongs to the bacterial ribosomal protein bS16 family.

The sequence is that of Small ribosomal subunit protein bS16 from Acidovorax ebreus (strain TPSY) (Diaphorobacter sp. (strain TPSY)).